The primary structure comprises 172 residues: R-phycocyanin-1 beta chain (172 aa).

An N4-methylasparagine modification is found at Asn72. Cys82 contributes to the (2R,3E)-phycocyanobilin binding site. A (2R,3E)-phycoerythrobilin-binding site is contributed by Cys153.

This sequence belongs to the phycobiliprotein family. As to quaternary structure, heterodimer of an alpha and a beta chain. Dimers further assemble into trimers and the trimers into hexamers. The basic functional unit of phycobiliproteins is a ring-shaped hexamer formed from two back-to-back trimers contacting via the alpha chain subunits. The trimers are composed of alpha/beta subunit heterodimers arranged around a three-fold axis of symmetry. The phycoerythrins also contain a gamma subunit which is located in the center of the hexamer. In terms of processing, contains two covalently linked bilin chromophores.

Its subcellular location is the plastid. It localises to the chloroplast thylakoid membrane. In terms of biological role, light-harvesting photosynthetic bile pigment-protein from the phycobiliprotein complex (phycobilisome, PBS). Phycocyanin is the major phycobiliprotein in the PBS rod. In Porphyridium purpureum (Red alga), this protein is R-phycocyanin-1 beta chain (rpcB).